Consider the following 395-residue polypeptide: Probable isocitrate dehydrogenase [NAD] gamma 2, mitochondrial (395 aa).

A mitochondrion-targeting transit peptide spans 1 to 25; the sequence is MLAAGSCSVRTILQPALLLGHSREV. Position 117 (threonine 117) interacts with citrate. Substrate contacts are provided by arginine 133, arginine 164, and aspartate 251. Position 251 (aspartate 251) interacts with Mn(2+). Residue asparagine 321 coordinates ADP.

Belongs to the isocitrate and isopropylmalate dehydrogenases family. In terms of assembly, heterooligomer of subunits alpha (IDH3A), beta (IDH3B), and gamma (IDH3G) in the apparent ratio of 2:1:1. The heterodimer containing one IDH3A and one IDH3B subunit and the heterodimer containing one IDH3A and one IDH3G subunit assemble into a heterotetramer (which contains two subunits of IDH3A, one of IDH3B and one of IDH3G) and further into the heterooctamer. It depends on Mg(2+) as a cofactor. Mn(2+) serves as cofactor.

The protein resides in the mitochondrion. Its activity is regulated as follows. The heterotetramer and the heterodimer composed of IDH3A and IDH3G subunits can be allosterically activated by citrate (CIT) or/and ADP, and the two activators can act independently or synergistically. The heterodimer composed of IDH3A and IDH3B subunits cannot be allosterically regulated and the allosteric regulation of the heterotetramer is through the IDH3G subunit and not the IDH3B subunit. The IDH3G subunit contains the allosteric site which consists of a CIT-binding site and an ADP-binding site, and the binding of CIT and ADP causes conformational changes at the allosteric site which are transmitted to the active site in the catalytic subunit (IDH3A) through a cascade of conformational changes at the heterodimer interface, leading to stabilization of the isocitrate-binding at the active site and thus activation of the enzyme. ATP can activate the heterotetramer and the heterodimer composed of IDH3A and IDH3G subunits at low concentrations but inhibits their activities at high concentrations, whereas ATP exhibits only inhibitory effect on the heterodimer composed of IDH3A and IDH3B subunits. Functionally, regulatory subunit which plays a role in the allosteric regulation of the enzyme catalyzing the decarboxylation of isocitrate (ICT) into alpha-ketoglutarate. The heterodimer composed of the alpha (IDH3A) and beta (IDH3B) subunits and the heterodimer composed of the alpha (IDH3A) and gamma (IDH3G) subunits, have considerable basal activity but the full activity of the heterotetramer (containing two subunits of IDH3A, one of IDH3B and one of IDH3G) requires the assembly and cooperative function of both heterodimers. The polypeptide is Probable isocitrate dehydrogenase [NAD] gamma 2, mitochondrial (Rattus norvegicus (Rat)).